A 134-amino-acid polypeptide reads, in one-letter code: UPF0216 protein AF_0460 (134 aa).

It belongs to the UPF0216 family.

The protein is UPF0216 protein AF_0460 of Archaeoglobus fulgidus (strain ATCC 49558 / DSM 4304 / JCM 9628 / NBRC 100126 / VC-16).